The following is a 181-amino-acid chain: UPF0397 protein SUB0313 (181 aa).

5 helical membrane-spanning segments follow: residues 11-31 (AIGI…ITIF), 45-65 (LFSV…GHML), 69-89 (FAGY…GLGI), 114-134 (VQAL…DILI), and 147-167 (LFAA…LLIA).

It belongs to the UPF0397 family.

Its subcellular location is the cell membrane. In Streptococcus uberis (strain ATCC BAA-854 / 0140J), this protein is UPF0397 protein SUB0313.